A 234-amino-acid polypeptide reads, in one-letter code: Dienlactone hydrolase 2 (234 aa).

Active-site residues include C143, D167, and H199.

This sequence belongs to the dienelactone hydrolase family.

It participates in xenobiotic degradation. In terms of biological role, dienlactone hydrolase; part of the Fusarium detoxification of benzoxazolinone cluster 2 (FDB2) involved in the degradation of benzoxazolinones produced by the host plant. Maize, wheat, and rye produce the 2 benzoxazinone phytoanticipins 2,4-dihy-droxy-7-methoxy-1,4-benzoxazin-3-one (DIMBOA) and 2,4-dihydroxy-1,4-benzoxazin-3-one (DIBOA) that, due to their inherent instability once released, spontaneously degrade to the more stable corresponding benzoxazolinones, 6-methoxy-2-benzoxazolinone (MBOA) and 2-benzoxazolinone (BOA), respectively. The first step in the detoxification of benzoxazolinones involves the hydrolysis of the cyclic ester bond of benzoxazolinones by the FDB1 cluster gamma-lactamase MBL1 to aminophenols. MBL1 is able to convert BOA into 2-aminophenol (2-AP), as well as MBOA into 5-methoxy-2-aminophenol (2-AMP). The FDB2 cluster N-malonyltransferase FDB2/NAT1 then metabolizes aminophenols via N-malonylation to non-toxic malonamic acids. FDB2/NAT1 converts 2-AP into N-(2-hydroxyphenyl) malonamic acid (HPMA) and 2-AMP into N-(2-hydroxy-4-methoxyphenyl) malonamic acid (HMPMA). The duplicated dienlactone hydrolases DLH1 and DLH2 may provide redundant function for hydrolyzing the lactone moiety in the BOA molecule. The roles of the amidases and other enzymes encoded by the 2 FDB clusters have not been identified so far. This Gibberella moniliformis (strain M3125 / FGSC 7600) (Maize ear and stalk rot fungus) protein is Dienlactone hydrolase 2.